Reading from the N-terminus, the 167-residue chain is Ion-translocating oxidoreductase complex subunit B (167 aa).

The tract at residues 1–22 is hydrophobic; that stretch reads MITLIIFSFLSFLLGIILSFTA. The 60-residue stretch at 28–87 folds into the 4Fe-4S domain; sequence QEDPIVAIVNELLPQSQCAQCGYSGCYPYAKAIVENSEKINKCIPGGTDLISAISSVLSI. Positions 45, 48, 53, 70, 113, 116, 119, 123, 143, 146, 149, and 153 each coordinate [4Fe-4S] cluster. 4Fe-4S ferredoxin-type domains lie at 104 to 133 and 134 to 163; these read NTVL…GAPN and FIHT…IKKE.

The protein belongs to the 4Fe4S bacterial-type ferredoxin family. RnfB subfamily. The complex is composed of six subunits: RnfA, RnfB, RnfC, RnfD, RnfE and RnfG. [4Fe-4S] cluster serves as cofactor.

The protein resides in the cell inner membrane. Part of a membrane-bound complex that couples electron transfer with translocation of ions across the membrane. The sequence is that of Ion-translocating oxidoreductase complex subunit B from Buchnera aphidicola subsp. Acyrthosiphon pisum (strain 5A).